The chain runs to 54 residues: uncharacterized protein (54 aa).

The segment covering 23–35 has biased composition (basic and acidic residues); it reads DVMQEGETAKELN. The disordered stretch occupies residues 23–54; that stretch reads DVMQEGETAKELNYEGEDMQATSSAQNRQTSV. Residues 42–54 are compositionally biased toward polar residues; that stretch reads QATSSAQNRQTSV.

This is an uncharacterized protein from Bacillus subtilis (strain 168).